A 496-amino-acid chain; its full sequence is Glycerol kinase (496 aa).

Residue Thr-12 participates in ADP binding. Positions 12, 13, and 14 each coordinate ATP. A sn-glycerol 3-phosphate-binding site is contributed by Thr-12. Residue Arg-16 coordinates ADP. Residues Arg-82, Glu-83, and Tyr-134 each coordinate sn-glycerol 3-phosphate. 3 residues coordinate glycerol: Arg-82, Glu-83, and Tyr-134. Residue His-230 is modified to Phosphohistidine; by HPr. Asp-244 contributes to the sn-glycerol 3-phosphate binding site. Positions 244 and 245 each coordinate glycerol. ADP-binding residues include Thr-266 and Gly-309. Positions 266, 309, 313, and 410 each coordinate ATP. The ADP site is built by Gly-410 and Asn-414.

It belongs to the FGGY kinase family. As to quaternary structure, homotetramer and homodimer (in equilibrium). The phosphoenolpyruvate-dependent sugar phosphotransferase system (PTS), including enzyme I, and histidine-containing protein (HPr) are required for the phosphorylation, which leads to the activation of the enzyme.

It catalyses the reaction glycerol + ATP = sn-glycerol 3-phosphate + ADP + H(+). It participates in polyol metabolism; glycerol degradation via glycerol kinase pathway; sn-glycerol 3-phosphate from glycerol: step 1/1. With respect to regulation, activated by phosphorylation and inhibited by fructose 1,6-bisphosphate (FBP). Functionally, key enzyme in the regulation of glycerol uptake and metabolism. Catalyzes the phosphorylation of glycerol to yield sn-glycerol 3-phosphate. This chain is Glycerol kinase, found in Bacillus anthracis (strain A0248).